A 224-amino-acid chain; its full sequence is CASP-like protein 3A1 (224 aa).

Topologically, residues 1 to 59 (MMMNGQKLAPAAEVAVQLPESKVAADNISGTMSGPLVGASGGGTTAAMRPFGRKAEVMH) are cytoplasmic. A helical membrane pass occupies residues 60–80 (VLLRLLCIITSVAALSFMFTA). At 81-106 (QQSSTISIYGFMLPVQSKWSFSHSFE) the chain is on the extracellular side. Residues 107–127 (YLVGVSAAVAAHSLLQLLISM) form a helical membrane-spanning segment. The Cytoplasmic portion of the chain corresponds to 128–142 (SRLLRKSPVIPSRSH). A helical membrane pass occupies residues 143-163 (AWLIFAGDQVFAYAMISAGAA). Topologically, residues 164–192 (ASGVTNLNRTGIQHTALPNFCKPLQSFCD) are extracellular. N-linked (GlcNAc...) asparagine glycosylation occurs at Asn-171. Residues 193 to 213 (HVAVSIFFTFTSCFLLAASAV) form a helical membrane-spanning segment. Residues 214 to 224 (QEVIWLSRSKY) lie on the Cytoplasmic side of the membrane.

This sequence belongs to the Casparian strip membrane proteins (CASP) family. In terms of assembly, homodimer and heterodimers.

Its subcellular location is the cell membrane. This Populus trichocarpa (Western balsam poplar) protein is CASP-like protein 3A1.